A 366-amino-acid chain; its full sequence is Homeobox-leucine zipper protein HOX21 (366 aa).

2 disordered regions span residues 25 to 81 and 94 to 132; these read QQAA…SSAQ and MLGK…EKKR. A compositionally biased stretch (basic residues) spans 36 to 48; sequence HHHHHHHGHHGHH. Pro residues predominate over residues 62-74; sequence GPPPPPPPHPHNP. Over residues 103–115 the composition is skewed to gly residues; sequence GDGGGGGDEVNGG. Residues 127–186 constitute a DNA-binding region (homeobox); the sequence is AGEKKRRLNVEQVRTLEKNFELGNKLEPERKMQLARALGLQPRQVAIWFQNRRARWKTKQ. The segment at 185 to 229 is leucine-zipper; that stretch reads KQLEKDYDALKRQLDAVKAENDALLNHNKKLQAEIVALKGREAAS. Disordered stretches follow at residues 239 to 287 and 312 to 336; these read EASC…GGGG and LHSS…VQAA. The segment covering 240-252 has biased composition (polar residues); the sequence is ASCSNRSENSSEI.

Belongs to the HD-ZIP homeobox family. Class I subfamily. Expressed in seedlings, roots, stems, leaf blades and panicles.

It localises to the nucleus. Its function is as follows. Probable transcription factor. The sequence is that of Homeobox-leucine zipper protein HOX21 (HOX21) from Oryza sativa subsp. japonica (Rice).